The following is a 2300-amino-acid chain: MTRNDGGSRYSSIDSAQSSITAKPFPLTPTSSLGSSMTRPLSPSLQAGSSSSNGGHNVSRSASQGARRPAPTRLKTDDGTQFASRSSRDFESSQSQSQPSHTQTRSHSLSQATLQSCSQPQLSLNSQQSQSPSQYHSQQTPTQQQPQQQVSPTGGSRLTQSPTTPSNASIREHRMSELGGYRREMAAMLDTTGGALSRTSSHSQQQPQQPQQQQQQQQQQQGHAAGSVSGTFSNLSQYAPYLGGNNGGGMSMGSFLNDSTDNLSVISQLSPGIRPMTARPSQASAGSMEFPDSAYYDDERRPSIASITTTASSQGSRTSKTRGGLQKLQQFFGDRDDWPGRDSSEISLPQPSHSGPMSTGKEHRSHSYSLPGSGRSHRDRNYSNATDHHPSTFGSVSTVGGRDRDASPVPSRPRTPVPAPEVVPFLYQEADDIARYGEAPVRTSLTGPDRDRYIDSSQNPPKTSSSARSGHSIVHLPGHHKHNKSNEDPRALKPSLSREDSAASFARDFRNGSSSMMGTRSRAQSPAPSWTGTSRGLKANSISDGTSSPAPSHKKGILGRFRRHNKDKEDGSSLRSGSNHTLVHRPSRQDLTRAAESTYPASVYVSDPSEQREVPVRPGYVRQTTAPGFTTKLFTSKKSSSAKQPQDDMDEDIGPTDMHMGGGTVYHLDTNLNDMEGILTKPQPMTPLDNSISMRRESEKMIVPITTDPEGAWAAPDSWAVRDNKKSLAPQVNEDLCSRQPSEEKEKKSNYYIRVFRSDSTWTTLTLPLTATAEDVIMGVAKKTYLPPGAQDSYSLLIKKHDLFRVLNSAEQPLRIQKRLFQQIGYQEKDGIDEIGREDNSYICRWVFLKEKEADMHLLSPDINFRNQKLNHVDLSGRNLITIPVPLYRKAAEIVSLNLSRNLSLDVPRDFIQACTALRDIKYNNNEAQALPKSFATASKLTYLDVSNNRLQDLDHSELSKLTGLLKLNLANNCLRSLPPTLGAYKSLRTLNISSNFLDVFPSFICELETIVDLDLSFNSINNLPDNLMKLRNLEKFVITNNRLSGPISESVRDLVSLRELDIRYNQISTIDVLSDLPRLEILSADHNQISKFSGSFERLRSLKLNSNPIVKFEVKAPVPTLKILNLSNAQLASIDESIDNLMNLERLILDSNYFVSLPNQIGNLKKLDHLSMANNHLGELPPEIGCLTELRTLDVHGNNMRKLPNEIWWANKLEHLNASSNILTEFPKPASRAPQAPGEASPSPGAYPFPNANKNGLLSRTPSMDDLNGDASRRPSQASSTLLGVAVSPVPSGPDNRKSSMVSLYGKGGRKTSVVSRSTTQSSTGVITPSNGPRKDSSLSYRFTHTFSGSLKNLYLADNQLDDDVFEELKHLPELRVLNLSCNDLSDMPQGTIRSWPQLVELYLSGNELTSLPAEDFLEEHCLLQTLHINGNKFINLPAEISRAKKLQVLDCSSNNLKYNVTNVPYDWNWNFNRDLRYLNLSGNKRLEIKNNYRQPQSYRDDDFADTDFSKLTNLRVLGLMEVTHTLPNIPDQTEDRRVRTSEMKAGAYLPYGMADTLGKNEHLSLFDLVVPRLGSVETDTLVALFDGKELSTGGSKIAKFLYEEFSRLFILELEKVKGKPNENPADALRRTFLSVNKLLMSLSNSADERGLDSHPSRNYAHTVLTKEDLNSGCVATVAYLSELKLYVANVGDVQGMLIQANGSFKMLTKKHDPADPVERSRIRNAGGWVSRNGRLNDVLNVSRAFGYTELLPAVQAAPDITEHTIDDKDETVLIASKELWEHLRPELIVDVARECRSDLMKASQKLRDLAIAYGSTNKLLIMMIGVANLKQRQAQQFKGQLNATFSMPQDDPSHVPPSGNKRRKVRAEGPLDSNLMRLNAEVPPPTGQLSIVFTDIKNSTQLWENYPEAMRLAIKLHNEVMRRQLRMIGGFEVKTEGDAFMVSFPTATSALLWCFAVQMKLLTVDWPPEVLSNSSCQPIYDRNNNLITRGLSVRMGAHWGEPLAERDPVTRRMDYYGPMVNKASRISAVADGGQITASSDFITEIHRCLETYKESVDVDEDSLEDDATAKAIRAELRALSSQGFEVKDMGEKKLKGLENPELVYSVYPHALVGRTEQHHAHTESTQNQAALQPYGALATPKPATMDPDSEIQFEPETIWALWRVALRLEMLCSTLEEPNARGLQAPETELLERMKQRAGEVTDHFLLNFMEHQISRIETCITSLAVRHIAIGSGPITKLNDLRAPMNDVLSTLKEQMDELARYKAKYGSLDQAETDDATDNNSSGDVDTLDGSDTEQE.

Polar residues-rich tracts occupy residues 1-21 (MTRNDGGSRYSSIDSAQSSIT) and 28-41 (TPTSSLGSSMTRPL). 3 disordered regions span residues 1–256 (MTRN…GSFL), 272–593 (GIRP…DLTR), and 631–652 (TKLFTSKKSSSAKQPQDDMDED). Composition is skewed to low complexity over residues 42-61 (SPSLQAGSSSSNGGHNVSRS) and 92-152 (SSQS…QVSP). Polar residues predominate over residues 153-169 (TGGSRLTQSPTTPSNAS). Positions 170-185 (IREHRMSELGGYRREM) are enriched in basic and acidic residues. Residues 204–221 (QQQPQQPQQQQQQQQQQQ) are compositionally biased toward low complexity. Residues 228-237 (VSGTFSNLSQ) are compositionally biased toward polar residues. Positions 303 to 313 (SIASITTTASS) are enriched in low complexity. Over residues 333–344 (GDRDDWPGRDSS) the composition is skewed to basic and acidic residues. Residues 345–357 (EISLPQPSHSGPM) show a composition bias toward polar residues. The span at 410-421 (PSRPRTPVPAPE) shows a compositional bias: pro residues. Positions 455–469 (DSSQNPPKTSSSARS) are enriched in polar residues. Residues 484-501 (KSNEDPRALKPSLSREDS) show a composition bias toward basic and acidic residues. Over residues 511 to 550 (NGSSSMMGTRSRAQSPAPSWTGTSRGLKANSISDGTSSPA) the composition is skewed to polar residues. Residues 552–565 (SHKKGILGRFRRHN) are compositionally biased toward basic residues. Residues 631-643 (TKLFTSKKSSSAK) show a composition bias toward low complexity. The 93-residue stretch at 749–841 (SNYYIRVFRS…IDEIGREDNS (93 aa)) folds into the Ras-associating domain. LRR repeat units lie at residues 867–890 (NQKLNHVDLSGRNLITIPVPLYRK), 892–914 (AEIVSLNLSRNLSLDVPRDFIQA), 915–938 (CTALRDIKYNNNEAQALPKSFATA), 939–961 (SKLTYLDVSNNRLQDLDHSELSK), 962–986 (LTGLLKLNLANNCLRSLPPTLGAYK), 988–1008 (LRTLNISSNFLDVFPSFICEL), 1009–1031 (ETIVDLDLSFNSINNLPDNLMKL), 1033–1055 (NLEKFVITNNRLSGPISESVRDL), 1056–1079 (VSLRELDIRYNQISTIDVLSDLPR), 1081–1097 (EILSADHNQISKFSGSF), 1098–1119 (ERLRSLKLNSNPIVKFEVKAPV), 1120–1142 (PTLKILNLSNAQLASIDESIDNL), 1143–1165 (MNLERLILDSNYFVSLPNQIGNL), 1166–1188 (KKLDHLSMANNHLGELPPEIGCL), 1189–1211 (TELRTLDVHGNNMRKLPNEIWWA), and 1213–1234 (KLEHLNASSNILTEFPKPASRA). A disordered region spans residues 1228 to 1336 (PKPASRAPQA…VITPSNGPRK (109 aa)). Over residues 1253–1263 (ANKNGLLSRTP) the composition is skewed to polar residues. The segment covering 1313 to 1327 (TSVVSRSTTQSSTGV) has biased composition (low complexity). 6 LRR repeats span residues 1349-1369 (SGSLKNLYLADNQLDDDVFEE), 1373-1396 (LPELRVLNLSCNDLSDMPQGTIRS), 1398-1420 (PQLVELYLSGNELTSLPAEDFLE), 1422-1445 (HCLLQTLHINGNKFINLPAEISRA), 1447-1469 (KLQVLDCSSNNLKYNVTNVPYDW), and 1474-1497 (NRDLRYLNLSGNKRLEIKNNYRQP). A PPM-type phosphatase domain is found at 1552–1828 (PYGMADTLGK…NKLLIMMIGV (277 aa)). A disordered region spans residues 1847–1867 (FSMPQDDPSHVPPSGNKRRKV). The 138-residue stretch at 1892-2029 (SIVFTDIKNS…PMVNKASRIS (138 aa)) folds into the Guanylate cyclase domain. 2 residues coordinate Mg(2+): aspartate 1897 and aspartate 1940. A disordered region spans residues 2272-2300 (LDQAETDDATDNNSSGDVDTLDGSDTEQE). A compositionally biased stretch (acidic residues) spans 2290 to 2300 (DTLDGSDTEQE).

The protein belongs to the adenylyl cyclase class-4/guanylyl cyclase family. It depends on Mg(2+) as a cofactor.

It catalyses the reaction ATP = 3',5'-cyclic AMP + diphosphate. In terms of biological role, plays essential roles in regulation of cellular metabolism by catalyzing the synthesis of a second messenger, cAMP. The protein is Adenylate cyclase (cr-1) of Neurospora crassa (strain ATCC 24698 / 74-OR23-1A / CBS 708.71 / DSM 1257 / FGSC 987).